Consider the following 241-residue polypeptide: Synaptogyrin (241 aa).

One can recognise an MARVEL domain in the interval 30 to 179 (FAMKPQVVIR…CALMAYKRFL (150 aa)). The next 4 helical transmembrane spans lie at 34-54 (PQVVIRALCWLFSVVVFGCIS), 81-101 (MVGVFGFLASMGFMGGEFLFE), 115-135 (ADMGFSALWTFMYFVAFLYLW), and 155-175 (TAIWFCLFSIVSWALCALMAY). Positions 216–241 (ASPFGQPQQGGMEQQQSGMEYQQPTY) are disordered. Low complexity predominate over residues 220–241 (GQPQQGGMEQQQSGMEYQQPTY).

Belongs to the synaptogyrin family.

The protein localises to the cytoplasmic vesicle membrane. It localises to the cytoplasmic vesicle. It is found in the secretory vesicle membrane. The protein resides in the secretory vesicle. Its subcellular location is the synaptic vesicle membrane. Its function is as follows. Required for the correct formation of synaptic vesicles at nerve terminals and has a role in the regulation of the synaptic vesicle exo-endocytic cycle. The chain is Synaptogyrin from Drosophila melanogaster (Fruit fly).